A 314-amino-acid chain; its full sequence is 2,3-dihydroxyphenylpropionate/2,3-dihydroxicinnamic acid 1,2-dioxygenase 2 (314 aa).

His115 serves as the catalytic Proton donor. Catalysis depends on His179, which acts as the Proton acceptor.

The protein belongs to the LigB/MhpB extradiol dioxygenase family. In terms of assembly, homotetramer. Fe(2+) serves as cofactor.

The enzyme catalyses 3-(2,3-dihydroxyphenyl)propanoate + O2 = (2Z,4E)-2-hydroxy-6-oxonona-2,4-dienedioate + H(+). It carries out the reaction (2E)-3-(2,3-dihydroxyphenyl)prop-2-enoate + O2 = (2Z,4E,7E)-2-hydroxy-6-oxonona-2,4,7-trienedioate + H(+). Its pathway is aromatic compound metabolism; 3-phenylpropanoate degradation. In terms of biological role, catalyzes the non-heme iron(II)-dependent oxidative cleavage of 2,3-dihydroxyphenylpropionic acid and 2,3-dihydroxicinnamic acid into 2-hydroxy-6-ketononadienedioate and 2-hydroxy-6-ketononatrienedioate, respectively. The sequence is that of 2,3-dihydroxyphenylpropionate/2,3-dihydroxicinnamic acid 1,2-dioxygenase 2 (mhpB2) from Pseudomonas putida (Arthrobacter siderocapsulatus).